We begin with the raw amino-acid sequence, 448 residues long: Extracellular serine protease (448 aa).

Positions 1–20 (MKLSHLSLAIISAITLAACG) are cleaved as a signal peptide. Residues 87 to 109 (KELENQASDDEVDPTKTGVVGNL) are disordered.

Belongs to the peptidase S17 family. It depends on a divalent metal cation as a cofactor.

Its function is as follows. This enzyme is a chymotrypsin-like serine protease. Degrades a variety of substrates present in the skin and hoof of the sheep, including elastin, keratin, fibrinogen and collagen. It seems to play an important role in the pathogenesis of sheep footrot. In Dichelobacter nodosus (Bacteroides nodosus), this protein is Extracellular serine protease (prvA).